A 320-amino-acid polypeptide reads, in one-letter code: Mitochondrial thiamine pyrophosphate carrier (320 aa).

3 Solcar repeats span residues 13-106 (NTKF…LTEL), 116-202 (REFS…LKHL), and 214-309 (NENL…FCNV). Residues 19–39 (AVAGSVSGLVTRALISPFDVI) traverse the membrane as a helical segment. S51 is subject to Phosphoserine. Helical transmembrane passes span 87 to 107 (ILSIGYGAVQFLSFEMLTELV), 122 to 142 (FVCGGLAACMATLTVHPVDVL), 173 to 193 (VFYKGLAPTLIAIFPYAGLQF), and 220 to 240 (LLCGSGAGVISKTLTYPLDLF). A Substrate recognition motif is present at residues 241-246 (KKRLQV). A helical transmembrane segment spans residues 293 to 313 (ALSTGFMFFSYEFFCNVFHCM).

Belongs to the mitochondrial carrier (TC 2.A.29) family. Expressed in all tissues examined except for placenta. Highest levels in colon, kidney, lung, testis, spleen, and brain.

The protein localises to the mitochondrion membrane. It carries out the reaction thiamine phosphate(out) + thiamine diphosphate(in) = thiamine phosphate(in) + thiamine diphosphate(out). Mitochondrial transporter mediating uptake of thiamine diphosphate into mitochondria. It is not clear if the antiporter activity is affected by the membrane potential or by the proton electrochemical gradient. In Homo sapiens (Human), this protein is Mitochondrial thiamine pyrophosphate carrier.